The sequence spans 286 residues: Bifunctional protein FolD (286 aa).

Residues 166–168 and Ile-232 each bind NADP(+); that span reads GAS.

It belongs to the tetrahydrofolate dehydrogenase/cyclohydrolase family. In terms of assembly, homodimer.

It catalyses the reaction (6R)-5,10-methylene-5,6,7,8-tetrahydrofolate + NADP(+) = (6R)-5,10-methenyltetrahydrofolate + NADPH. The catalysed reaction is (6R)-5,10-methenyltetrahydrofolate + H2O = (6R)-10-formyltetrahydrofolate + H(+). The protein operates within one-carbon metabolism; tetrahydrofolate interconversion. Catalyzes the oxidation of 5,10-methylenetetrahydrofolate to 5,10-methenyltetrahydrofolate and then the hydrolysis of 5,10-methenyltetrahydrofolate to 10-formyltetrahydrofolate. This Vibrio campbellii (strain ATCC BAA-1116) protein is Bifunctional protein FolD.